Reading from the N-terminus, the 270-residue chain is Small ribosomal subunit protein eS1 (270 aa).

Disordered stretches follow at residues 1-20 (MAVGKNKGTSKGGKKGSKKK) and 238-270 (GGGKGAEVSTGAAEGGVVVDRPEGYEPPVQESV).

This sequence belongs to the eukaryotic ribosomal protein eS1 family. Component of the small ribosomal subunit. Mature ribosomes consist of a small (40S) and a large (60S) subunit. The 40S subunit contains about 33 different proteins and 1 molecule of RNA (18S). The 60S subunit contains about 49 different proteins and 3 molecules of RNA (28S, 5.8S and 5S).

Its subcellular location is the cytoplasm. In Culex quinquefasciatus (Southern house mosquito), this protein is Small ribosomal subunit protein eS1.